The chain runs to 120 residues: Seripauperin-4 (120 aa).

Residues 7 to 24 (IAAGVAAIAATASATTTI) traverse the membrane as a helical segment.

Belongs to the SRP1/TIP1 family. Seripauperin subfamily.

The protein localises to the membrane. The polypeptide is Seripauperin-4 (PAU4) (Saccharomyces cerevisiae (strain ATCC 204508 / S288c) (Baker's yeast)).